A 469-amino-acid polypeptide reads, in one-letter code: 3-isopropylmalate dehydratase large subunit (469 aa).

3 residues coordinate [4Fe-4S] cluster: cysteine 350, cysteine 410, and cysteine 413.

This sequence belongs to the aconitase/IPM isomerase family. LeuC type 1 subfamily. In terms of assembly, heterodimer of LeuC and LeuD. [4Fe-4S] cluster serves as cofactor.

The enzyme catalyses (2R,3S)-3-isopropylmalate = (2S)-2-isopropylmalate. It functions in the pathway amino-acid biosynthesis; L-leucine biosynthesis; L-leucine from 3-methyl-2-oxobutanoate: step 2/4. In terms of biological role, catalyzes the isomerization between 2-isopropylmalate and 3-isopropylmalate, via the formation of 2-isopropylmaleate. In Rhizobium leguminosarum bv. trifolii (strain WSM2304), this protein is 3-isopropylmalate dehydratase large subunit.